The sequence spans 301 residues: RNA polymerase II holoenzyme cyclin-like subunit (301 aa).

Residues 53 to 142 enclose the Cyclin N-terminal domain; that stretch reads QQLIKLGKRT…LGECEFALIS (90 aa).

Belongs to the cyclin family. Cyclin C subfamily. In terms of assembly, component of the srb8-11 complex, a regulatory module of the Mediator complex.

Its subcellular location is the nucleus. In terms of biological role, component of the srb8-11 complex. The srb8-11 complex is a regulatory module of the Mediator complex which is itself involved in regulation of basal and activated RNA polymerase II-dependent transcription. The srb8-11 complex may be involved in the transcriptional repression of a subset of genes regulated by Mediator. It may inhibit the association of the Mediator complex with RNA polymerase II to form the holoenzyme complex. The srb8-11 complex phosphorylates the C-terminal domain (CTD) of the largest subunit of RNA polymerase II. This is RNA polymerase II holoenzyme cyclin-like subunit (ssn8) from Aspergillus terreus (strain NIH 2624 / FGSC A1156).